Consider the following 290-residue polypeptide: NAD kinase (290 aa).

D72 (proton acceptor) is an active-site residue. NAD(+) is bound by residues 72–73 (DG), K77, 145–146 (NE), D175, 186–191 (TAYSLS), and A210.

The protein belongs to the NAD kinase family. The cofactor is a divalent metal cation.

Its subcellular location is the cytoplasm. It catalyses the reaction NAD(+) + ATP = ADP + NADP(+) + H(+). Involved in the regulation of the intracellular balance of NAD and NADP, and is a key enzyme in the biosynthesis of NADP. Catalyzes specifically the phosphorylation on 2'-hydroxyl of the adenosine moiety of NAD to yield NADP. This chain is NAD kinase, found in Bacteroides fragilis (strain YCH46).